A 134-amino-acid chain; its full sequence is MIEVGEYKVKEGLYYTKDHEWAQVLEDGTVLVGITDYAQKELGDLAYVELPEVGKEVSKGDVLCEVESVKAVSEVYAPVSGEVIEVNEELSDSPEKINEDPYGAWIAKIKPKNLEEELKELMDAEKYAEYLKTL.

One can recognise a Lipoyl-binding domain in the interval 29 to 110 (TVLVGITDYA…PYGAWIAKIK (82 aa)). Residue Lys-70 is modified to N6-lipoyllysine.

This sequence belongs to the GcvH family. The glycine cleavage system is composed of four proteins: P, T, L and H. Requires (R)-lipoate as cofactor.

In terms of biological role, the glycine cleavage system catalyzes the degradation of glycine. The H protein shuttles the methylamine group of glycine from the P protein to the T protein. In Pyrococcus horikoshii (strain ATCC 700860 / DSM 12428 / JCM 9974 / NBRC 100139 / OT-3), this protein is Probable glycine cleavage system H protein.